Reading from the N-terminus, the 864-residue chain is Leucine--tRNA ligase (864 aa).

The 'HIGH' region signature appears at 42-52; that stretch reads PYPSGKLHMGH. A 'KMSKS' region motif is present at residues 624–628; sequence KMSKS. An ATP-binding site is contributed by K627.

Belongs to the class-I aminoacyl-tRNA synthetase family.

It localises to the cytoplasm. The catalysed reaction is tRNA(Leu) + L-leucine + ATP = L-leucyl-tRNA(Leu) + AMP + diphosphate. The sequence is that of Leucine--tRNA ligase from Burkholderia pseudomallei (strain 1106a).